Consider the following 310-residue polypeptide: GPN-loop GTPase 2 (310 aa).

At Ala2 the chain carries N-acetylalanine. Gly19 to Thr24 is a GTP binding site. Residues Gly76 to Asn78 carry the Gly-Pro-Asn (GPN)-loop; involved in dimer interface motif. Ser178–Asp181 serves as a coordination point for GTP.

This sequence belongs to the GPN-loop GTPase family. In terms of assembly, heterodimers with GPN1 or GPN3. Binds to RNA polymerase II (RNAPII).

In terms of biological role, small GTPase required for proper localization of RNA polymerase II and III (RNAPII and RNAPIII). May act at an RNAP assembly step prior to nuclear import. This chain is GPN-loop GTPase 2, found in Rattus norvegicus (Rat).